Here is a 387-residue protein sequence, read N- to C-terminus: WD repeat-containing protein 55 (387 aa).

Residues 1-10 (MATPTEHEDL) show a composition bias toward basic and acidic residues. The interval 1-24 (MATPTEHEDLSEQEVTEDEFKTPK) is disordered. WD repeat units lie at residues 33 to 72 (KLEA…GENK), 79 to 118 (HHLK…LETR), 122 to 160 (AHKV…SFMD), 163 to 202 (HHED…FELL), 205 to 244 (IQNG…ATSD), 247 to 286 (AVQA…VVGS), and 290 to 329 (HVGE…DEKV). Residues 356-387 (FFAGLLDTTEENGKEGENDEDDDDEDSDSGSD) form a disordered region. Positions 372–387 (ENDEDDDDEDSDSGSD) are enriched in acidic residues.

The protein belongs to the WD repeat WDR55 family.

It localises to the nucleus. It is found in the nucleolus. Nucleolar protein that acts as a modulator of rRNA synthesis. Plays a central role during organogenesis. The chain is WD repeat-containing protein 55 (wdr55) from Danio rerio (Zebrafish).